We begin with the raw amino-acid sequence, 187 residues long: Protein ECM23 (187 aa).

2 disordered regions span residues 106 to 127 (GKKS…LPNG) and 167 to 187 (KKIR…FKNK). Residues 126–180 (NGQPKECATCGDTWTSQWRSGPNGNVELCSRCGIAYRKKMEKKIRSQQSSDDGTK) form a GATA-type zinc finger.

Involved in morphogenesis. May be involved in cell wall organization and biogenesis. This is Protein ECM23 (ECM23) from Saccharomyces cerevisiae (strain ATCC 204508 / S288c) (Baker's yeast).